We begin with the raw amino-acid sequence, 359 residues long: Phospho-N-acetylmuramoyl-pentapeptide-transferase (359 aa).

The next 10 helical transmembrane spans lie at 3 to 23 (QILI…PALI), 55 to 75 (VAII…GLAF), 80 to 100 (ISAS…VGFL), 117 to 137 (TAKT…ALGF), 156 to 176 (IATV…VVSA), 187 to 207 (LDGL…LITF), 231 to 251 (LAIV…WNAA), 255 to 275 (IFMG…ISVT), 280 to 300 (ILAV…VLQI), and 334 to 354 (FWLL…GEWL).

It belongs to the glycosyltransferase 4 family. MraY subfamily. Mg(2+) serves as cofactor.

It is found in the cell membrane. It catalyses the reaction UDP-N-acetyl-alpha-D-muramoyl-L-alanyl-gamma-D-glutamyl-meso-2,6-diaminopimeloyl-D-alanyl-D-alanine + di-trans,octa-cis-undecaprenyl phosphate = di-trans,octa-cis-undecaprenyl diphospho-N-acetyl-alpha-D-muramoyl-L-alanyl-D-glutamyl-meso-2,6-diaminopimeloyl-D-alanyl-D-alanine + UMP. The protein operates within cell wall biogenesis; peptidoglycan biosynthesis. Functionally, catalyzes the initial step of the lipid cycle reactions in the biosynthesis of the cell wall peptidoglycan: transfers peptidoglycan precursor phospho-MurNAc-pentapeptide from UDP-MurNAc-pentapeptide onto the lipid carrier undecaprenyl phosphate, yielding undecaprenyl-pyrophosphoryl-MurNAc-pentapeptide, known as lipid I. The chain is Phospho-N-acetylmuramoyl-pentapeptide-transferase from Mycolicibacterium paratuberculosis (strain ATCC BAA-968 / K-10) (Mycobacterium paratuberculosis).